A 249-amino-acid chain; its full sequence is 2,3-bisphosphoglycerate-dependent phosphoglycerate mutase (249 aa).

Substrate is bound by residues 11 to 18 (RHGESEWN), 24 to 25 (TG), arginine 63, 90 to 93 (ERHY), lysine 101, and 117 to 118 (RR). Histidine 12 serves as the catalytic Tele-phosphohistidine intermediate. The active-site Proton donor/acceptor is glutamate 90. Positions 119–138 (SYDTPPPPIERGSTYSQDAD) are disordered. Position 184-185 (184-185 (GN)) interacts with substrate.

Belongs to the phosphoglycerate mutase family. BPG-dependent PGAM subfamily.

The catalysed reaction is (2R)-2-phosphoglycerate = (2R)-3-phosphoglycerate. The protein operates within carbohydrate degradation; glycolysis; pyruvate from D-glyceraldehyde 3-phosphate: step 3/5. Functionally, catalyzes the interconversion of 2-phosphoglycerate and 3-phosphoglycerate. This Mycolicibacterium paratuberculosis (strain ATCC BAA-968 / K-10) (Mycobacterium paratuberculosis) protein is 2,3-bisphosphoglycerate-dependent phosphoglycerate mutase.